Here is a 73-residue protein sequence, read N- to C-terminus: NADH dehydrogenase [ubiquinone] 1 beta subcomplex subunit 3-B (73 aa).

A helical transmembrane segment spans residues 31-48 (ALPGLGIGVAAFCVYLVG).

Belongs to the complex I NDUFB3 subunit family. In terms of assembly, complex I is composed of at least 49 different subunits.

Its subcellular location is the mitochondrion inner membrane. Accessory subunit of the mitochondrial membrane respiratory chain NADH dehydrogenase (Complex I), that is believed not to be involved in catalysis. Complex I functions in the transfer of electrons from NADH to the respiratory chain. The immediate electron acceptor for the enzyme is believed to be ubiquinone. The chain is NADH dehydrogenase [ubiquinone] 1 beta subcomplex subunit 3-B from Arabidopsis thaliana (Mouse-ear cress).